A 440-amino-acid polypeptide reads, in one-letter code: Suppressor of cytokine signaling 4 (440 aa).

Residues 1–11 (MAENSESNSKN) show a composition bias toward polar residues. The disordered stretch occupies residues 1–29 (MAENSESNSKNVDVRPKTSRSRSADRKDG). Residues 12–29 (VDVRPKTSRSRSADRKDG) show a composition bias toward basic and acidic residues. One can recognise an SH2 domain in the interval 286 to 381 (CYWGVMDKYA…FFEPLLSTPL (96 aa)). One can recognise an SOCS box domain in the interval 376–425 (LLSTPLIRTFPFSLQHICRTVICNCTTYDGIDALPIPSSMKLYLKEYHYK).

The protein operates within protein modification; protein ubiquitination. SOCS family proteins form part of a classical negative feedback system that regulates cytokine signal transduction. Substrate-recognition component of a SCF-like ECS (Elongin BC-CUL2/5-SOCS-box protein) E3 ubiquitin-protein ligase complex which mediates the ubiquitination and subsequent proteasomal degradation of target proteins. Inhibits EGF signaling by mediating the degradation of the Tyr-phosphorylated EGF receptor/EGFR. In Bos taurus (Bovine), this protein is Suppressor of cytokine signaling 4 (SOCS4).